Consider the following 1378-residue polypeptide: DNA-directed RNA polymerase subunit beta (1378 aa).

It belongs to the RNA polymerase beta chain family. The RNAP catalytic core consists of 2 alpha, 1 beta, 1 beta' and 1 omega subunit. When a sigma factor is associated with the core the holoenzyme is formed, which can initiate transcription.

It carries out the reaction RNA(n) + a ribonucleoside 5'-triphosphate = RNA(n+1) + diphosphate. In terms of biological role, DNA-dependent RNA polymerase catalyzes the transcription of DNA into RNA using the four ribonucleoside triphosphates as substrates. The protein is DNA-directed RNA polymerase subunit beta of Hyphomonas neptunium (strain ATCC 15444).